Consider the following 276-residue polypeptide: Rhomboid-type serine protease 2 (276 aa).

5 helical membrane-spanning segments follow: residues 27–47, 77–97, 109–129, 132–152, and 175–195; these read LPLF…LTLV, FPFI…FTPL, TSVA…YVFV, FILH…LLLG, and WITP…SSFL. The active-site Nucleophile is the S144. H197 is a catalytic residue. The helical transmembrane segment at 198 to 218 threads the bilayer; it reads LAGLLVGYGFGLGYLKFLAPP.

This sequence belongs to the peptidase S54 family.

It localises to the golgi apparatus membrane. It is found in the golgi apparatus. Its subcellular location is the cis-Golgi network membrane. It catalyses the reaction Cleaves type-1 transmembrane domains using a catalytic dyad composed of serine and histidine that are contributed by different transmembrane domains.. Probable rhomboid-type serine protease that catalyzes intramembrane proteolysis. In Neurospora crassa (strain ATCC 24698 / 74-OR23-1A / CBS 708.71 / DSM 1257 / FGSC 987), this protein is Rhomboid-type serine protease 2 (rbd-2).